A 264-amino-acid chain; its full sequence is Thiazole synthase (264 aa).

Lysine 98 functions as the Schiff-base intermediate with DXP in the catalytic mechanism. Residues glycine 159, 185 to 186 (AG), and 207 to 208 (AT) each bind 1-deoxy-D-xylulose 5-phosphate.

Belongs to the ThiG family. In terms of assembly, homotetramer. Forms heterodimers with either ThiH or ThiS.

It localises to the cytoplasm. The enzyme catalyses [ThiS sulfur-carrier protein]-C-terminal-Gly-aminoethanethioate + 2-iminoacetate + 1-deoxy-D-xylulose 5-phosphate = [ThiS sulfur-carrier protein]-C-terminal Gly-Gly + 2-[(2R,5Z)-2-carboxy-4-methylthiazol-5(2H)-ylidene]ethyl phosphate + 2 H2O + H(+). It functions in the pathway cofactor biosynthesis; thiamine diphosphate biosynthesis. In terms of biological role, catalyzes the rearrangement of 1-deoxy-D-xylulose 5-phosphate (DXP) to produce the thiazole phosphate moiety of thiamine. Sulfur is provided by the thiocarboxylate moiety of the carrier protein ThiS. In vitro, sulfur can be provided by H(2)S. This is Thiazole synthase from Mycobacterium ulcerans (strain Agy99).